The primary structure comprises 400 residues: Phosphoglycerate kinase (400 aa).

Residues 23–25, R38, 61–64, R120, and R153 each bind substrate; these read DLN and HFGR. ATP is bound by residues K203, E325, and 355-358; that span reads GGDT.

The protein belongs to the phosphoglycerate kinase family. Monomer.

It localises to the cytoplasm. The catalysed reaction is (2R)-3-phosphoglycerate + ATP = (2R)-3-phospho-glyceroyl phosphate + ADP. It participates in carbohydrate degradation; glycolysis; pyruvate from D-glyceraldehyde 3-phosphate: step 2/5. The chain is Phosphoglycerate kinase from Methylorubrum extorquens (strain CM4 / NCIMB 13688) (Methylobacterium extorquens).